Consider the following 158-residue polypeptide: 2-C-methyl-D-erythritol 2,4-cyclodiphosphate synthase (158 aa).

2 residues coordinate a divalent metal cation: Asp9 and His11. Residues 9 to 11 and 35 to 36 contribute to the 4-CDP-2-C-methyl-D-erythritol 2-phosphate site; these read DVH and HS. An a divalent metal cation-binding site is contributed by His43. Residues 57-59, 62-66, 133-136, Phe140, and Arg143 contribute to the 4-CDP-2-C-methyl-D-erythritol 2-phosphate site; these read DIG, FPDTD, and TTTE.

The protein belongs to the IspF family. As to quaternary structure, homotrimer. Requires a divalent metal cation as cofactor.

It carries out the reaction 4-CDP-2-C-methyl-D-erythritol 2-phosphate = 2-C-methyl-D-erythritol 2,4-cyclic diphosphate + CMP. It participates in isoprenoid biosynthesis; isopentenyl diphosphate biosynthesis via DXP pathway; isopentenyl diphosphate from 1-deoxy-D-xylulose 5-phosphate: step 4/6. In terms of biological role, involved in the biosynthesis of isopentenyl diphosphate (IPP) and dimethylallyl diphosphate (DMAPP), two major building blocks of isoprenoid compounds. Catalyzes the conversion of 4-diphosphocytidyl-2-C-methyl-D-erythritol 2-phosphate (CDP-ME2P) to 2-C-methyl-D-erythritol 2,4-cyclodiphosphate (ME-CPP) with a corresponding release of cytidine 5-monophosphate (CMP). In Actinobacillus succinogenes (strain ATCC 55618 / DSM 22257 / CCUG 43843 / 130Z), this protein is 2-C-methyl-D-erythritol 2,4-cyclodiphosphate synthase.